Reading from the N-terminus, the 346-residue chain is Phenylalanine--tRNA ligase alpha subunit (346 aa).

Glu-261 contributes to the Mg(2+) binding site.

This sequence belongs to the class-II aminoacyl-tRNA synthetase family. Phe-tRNA synthetase alpha subunit type 1 subfamily. Tetramer of two alpha and two beta subunits. Requires Mg(2+) as cofactor.

It is found in the cytoplasm. The enzyme catalyses tRNA(Phe) + L-phenylalanine + ATP = L-phenylalanyl-tRNA(Phe) + AMP + diphosphate + H(+). The sequence is that of Phenylalanine--tRNA ligase alpha subunit from Streptococcus agalactiae serotype III (strain NEM316).